A 334-amino-acid polypeptide reads, in one-letter code: 4-hydroxyproline 2-epimerase (334 aa).

The Proton acceptor role is filled by Cys-90. Substrate-binding positions include 91 to 92 (GH), His-223, and Asp-249. The Proton donor role is filled by Cys-253. A substrate-binding site is contributed by 254 to 255 (GT).

The protein belongs to the proline racemase family. Homodimer.

It carries out the reaction trans-4-hydroxy-L-proline = cis-4-hydroxy-D-proline. Catalyzes the epimerization of trans-4-hydroxy-L-proline (t4LHyp) to cis-4-hydroxy-D-proline (c4DHyp). Is likely involved in a degradation pathway that converts t4LHyp to alpha-ketoglutarate, which would allow P.denitrificans to grow on t4LHyp as a sole carbon source. Also seems to be involved in an alternative catabolic pathway that degrades trans-4-hydroxy-L-proline betaine (tHyp-B) to alpha-ketoglutarate; this pathway would permit the utilization of tHyp-B as a sole carbon and nitrogen source. The chain is 4-hydroxyproline 2-epimerase (hypF) from Paracoccus denitrificans (strain Pd 1222).